Reading from the N-terminus, the 260-residue chain is Sphinganine C4-monooxygenase 1 (260 aa).

A run of 3 helical transmembrane segments spans residues leucine 11–leucine 31, serine 55–phenylalanine 75, and phenylalanine 92–phenylalanine 112. The Fatty acid hydroxylase domain maps to phenylalanine 99–threonine 235. Residues histidine 114–histidine 118 carry the Histidine box-1 motif. Residues histidine 128 to histidine 132 carry the Histidine box-2 motif. Residues tyrosine 207–glutamine 213 carry the Histidine box-3 motif.

Belongs to the sterol desaturase family. Fe cation is required as a cofactor. Ubiquitous, with higher levels in flowers and roots.

It localises to the endoplasmic reticulum membrane. The catalysed reaction is a dihydroceramide + 2 Fe(II)-[cytochrome b5] + O2 + 2 H(+) = a phytoceramide + 2 Fe(III)-[cytochrome b5] + H2O. It functions in the pathway membrane lipid metabolism; sphingolipid biosynthesis. Involved in sphingolipid trihydroxy long-chain base (4-hydroxysphinganine) biosynthesis. Can use C18- and C20-sphinganine as substrates to produce C18- and C20-phytosphinganines (D-ribo-2-amino-1,3,4-trihydroxyoctadecane and -eicosane). This Arabidopsis thaliana (Mouse-ear cress) protein is Sphinganine C4-monooxygenase 1 (SBH1).